A 284-amino-acid polypeptide reads, in one-letter code: Tropomyosin (284 aa).

The stretch at 1–284 forms a coiled coil; the sequence is MDAIKKKMQA…DMTFTELIGN (284 aa).

The protein belongs to the tropomyosin family. Homodimer.

Its function is as follows. Tropomyosin, in association with the troponin complex, plays a central role in the calcium dependent regulation of muscle contraction. The polypeptide is Tropomyosin (Blattella germanica (German cockroach)).